We begin with the raw amino-acid sequence, 541 residues long: Arginine--tRNA ligase (541 aa).

The short motif at 119 to 129 (ANPTGPLHIGH) is the 'HIGH' region element.

It belongs to the class-I aminoacyl-tRNA synthetase family. Monomer.

The protein resides in the cytoplasm. It catalyses the reaction tRNA(Arg) + L-arginine + ATP = L-arginyl-tRNA(Arg) + AMP + diphosphate. The sequence is that of Arginine--tRNA ligase from Helicobacter pylori (strain G27).